We begin with the raw amino-acid sequence, 423 residues long: MEKTPAETTAVSAGNVPRDSIPCITNVSADTRGRTRPSRPATVPQRRPARIGHFRRRSASLSFLDWPDDSVTEGVRTTSASVAASAARFDEIRRRRQSINDEMKERTLEDALAVELVNETFRCSVTSDARKDLQKLVRRVSGTVLRLSWPNGWFFTYCDLLRVGYFGHLNIKGLEKTFLCCDKFLLPVGTVSRCEAIGRPPLPVLIGEGGRVYVYSPVVESLYLVSRSGFRGFVQEGLRNYAPLREELGYVRFETGGDVGREFMLARDLLALWRLCMKREGSIFSWRDGNEALTTVVLNGSQTYEDPAHGNWLKETCSLNVLQVFVVRAVPVESQQRLDISILVNESGAVFGVHPDTRQAHFLARGLLGFFRVGFLRFCNNYCFARDCFTHPESVAPAYRATGCPRELFCRRLRKKKGLFARR.

Residues 1 to 12 are compositionally biased toward polar residues; the sequence is MEKTPAETTAVS. A disordered region spans residues 1-46; the sequence is MEKTPAETTAVSAGNVPRDSIPCITNVSADTRGRTRPSRPATVPQR.

The protein belongs to the herpesviridae US22 family.

It localises to the virion tegument. The polypeptide is Tegument protein UL43 (UL43) (Homo sapiens (Human)).